Consider the following 162-residue polypeptide: Probable tRNA (guanine(10)-N2)-dimethyltransferase (162 aa).

This sequence belongs to the methyltransferase superfamily. Trm-G10 family. Monomer.

It is found in the cytoplasm. The enzyme catalyses guanosine(10) in tRNA + 2 S-adenosyl-L-methionine = N(2)-dimethylguanosine(10) in tRNA + 2 S-adenosyl-L-homocysteine + 2 H(+). In terms of biological role, catalyzes the adenosylmethionine-dependent methylation of the exocyclic amino group (N(2)) of guanosine at position 10 of various tRNAs. Acts via a two-step process that leads to the formation of either N(2)-monomethyl (m(2)G) or N(2)-dimethylguanosine (m(2)(2)G). This chain is Probable tRNA (guanine(10)-N2)-dimethyltransferase (trmG10), found in Methanothermococcus thermolithotrophicus (Methanococcus thermolithotrophicus).